The primary structure comprises 348 residues: Putative serine/threonine-protein phosphatase C26H8.05c (348 aa).

Mn(2+) is bound by residues D53, H55, D81, and N113. Residue H114 is the Proton donor of the active site. Mn(2+) contacts are provided by H163 and H237. Residues T259–D282 form a disordered region. Over residues D269–P280 the composition is skewed to low complexity. Position 272 is a phosphoserine (S272). Position 348 is a leucine methyl ester (L348).

Belongs to the PPP phosphatase family. PP-1 subfamily. Mn(2+) serves as cofactor.

The protein resides in the cytoplasm. It is found in the nucleus. It catalyses the reaction O-phospho-L-seryl-[protein] + H2O = L-seryl-[protein] + phosphate. It carries out the reaction O-phospho-L-threonyl-[protein] + H2O = L-threonyl-[protein] + phosphate. This Schizosaccharomyces pombe (strain 972 / ATCC 24843) (Fission yeast) protein is Putative serine/threonine-protein phosphatase C26H8.05c.